Reading from the N-terminus, the 192-residue chain is Phosphomevalonate kinase (192 aa).

ATP-binding positions include 17–23 and R141; that span reads KRKSGKD. Position 170 (N170) interacts with substrate. Positions 171 and 180 each coordinate ATP.

Monomer.

The protein localises to the cytoplasm. It is found in the cytosol. It carries out the reaction (R)-5-phosphomevalonate + ATP = (R)-5-diphosphomevalonate + ADP. It participates in isoprenoid biosynthesis; isopentenyl diphosphate biosynthesis via mevalonate pathway; isopentenyl diphosphate from (R)-mevalonate: step 2/3. Catalyzes the reversible ATP-dependent phosphorylation of mevalonate 5-phosphate to produce mevalonate diphosphate and ADP, a key step in the mevalonic acid mediated biosynthesis of isopentenyl diphosphate and other polyisoprenoid metabolites. This is Phosphomevalonate kinase (Pmvk) from Mus musculus (Mouse).